Reading from the N-terminus, the 350-residue chain is Cell division protein ZipA (350 aa).

Residues 1 to 6 (MEDLQL) lie on the Periplasmic side of the membrane. A helical membrane pass occupies residues 7 to 27 (VLFVLGAIAIVAVLVHGFWSI). Over 28–350 (RKQQPRTIKE…QYLARIRANA (323 aa)) the chain is Cytoplasmic. Disordered stretches follow at residues 36-55 (KEQP…AEGF), 65-136 (VRKL…PSAR), and 187-213 (RVPA…EEPL). Composition is skewed to basic and acidic residues over residues 65–109 (VRKL…ESRA) and 116–131 (AAHE…HEEP).

It belongs to the ZipA family. In terms of assembly, interacts with FtsZ via their C-terminal domains.

Its subcellular location is the cell inner membrane. Essential cell division protein that stabilizes the FtsZ protofilaments by cross-linking them and that serves as a cytoplasmic membrane anchor for the Z ring. Also required for the recruitment to the septal ring of downstream cell division proteins. In Shewanella amazonensis (strain ATCC BAA-1098 / SB2B), this protein is Cell division protein ZipA.